We begin with the raw amino-acid sequence, 214 residues long: Ribonuclease T (214 aa).

The Exonuclease domain occupies 20–195 (VVVDVETAGF…YDTQQTAELF (176 aa)). D23, E25, H182, and D187 together coordinate Mg(2+). H182 functions as the Proton donor/acceptor in the catalytic mechanism.

The protein belongs to the RNase T family. Homodimer. Requires Mg(2+) as cofactor.

Functionally, trims short 3' overhangs of a variety of RNA species, leaving a one or two nucleotide 3' overhang. Responsible for the end-turnover of tRNA: specifically removes the terminal AMP residue from uncharged tRNA (tRNA-C-C-A). Also appears to be involved in tRNA biosynthesis. The sequence is that of Ribonuclease T from Vibrio campbellii (strain ATCC BAA-1116).